A 322-amino-acid chain; its full sequence is Methionyl-tRNA formyltransferase (322 aa).

Residue 112-115 (SLLP) participates in (6S)-5,6,7,8-tetrahydrofolate binding.

Belongs to the Fmt family.

It catalyses the reaction L-methionyl-tRNA(fMet) + (6R)-10-formyltetrahydrofolate = N-formyl-L-methionyl-tRNA(fMet) + (6S)-5,6,7,8-tetrahydrofolate + H(+). In terms of biological role, attaches a formyl group to the free amino group of methionyl-tRNA(fMet). The formyl group appears to play a dual role in the initiator identity of N-formylmethionyl-tRNA by promoting its recognition by IF2 and preventing the misappropriation of this tRNA by the elongation apparatus. The chain is Methionyl-tRNA formyltransferase from Synechococcus sp. (strain JA-3-3Ab) (Cyanobacteria bacterium Yellowstone A-Prime).